The primary structure comprises 154 residues: Nuclear cap-binding protein subunit 2 (154 aa).

The segment at 1-23 is disordered; the sequence is MSTSVDLSSYRDQHFKGSRSEQE. Residues 9-23 are compositionally biased toward basic and acidic residues; sequence SYRDQHFKGSRSEQE. MRNA-binding positions include tyrosine 10, tyrosine 33, 102-106, 113-117, and 123-124; these read RVDWD, RQYGR, and QV. The 79-residue stretch at 30–108 folds into the RRM domain; the sequence is TTLYVGNLSF…RLIRVDWDAG (79 aa).

It belongs to the RRM NCBP2 family. Component of the nuclear cap-binding complex (CBC), a heterodimer composed of Cbp80 and Cbp20 that interacts with m7GpppG-capped RNA. Interacts with Ars2.

It is found in the nucleus. In terms of biological role, component of the cap-binding complex (CBC), which binds co-transcriptionally to the 5' cap of pre-mRNAs and is involved in various processes such as pre-mRNA splicing and RNA-mediated gene silencing (RNAi). The CBC complex is involved in miRNA-mediated RNA interference via its interaction with Ars2 and is required for primary microRNAs (miRNAs) processing. Also involved in innate immunity via the short interfering RNAs (siRNAs) processing machinery by restricting the viral RNA production. In the CBC complex, Cbp20 recognizes and binds capped RNAs (m7GpppG-capped RNA) but requires Cbp80 to stabilize the movement of its N-terminal loop and lock the CBC into a high affinity cap-binding state with the cap structure. In Drosophila ananassae (Fruit fly), this protein is Nuclear cap-binding protein subunit 2 (Cbp20).